Consider the following 210-residue polypeptide: Glutathione S-transferase P 10 (210 aa).

Residues 2–81 enclose the GST N-terminal domain; it reads AVPQLYYFTI…HLGRVHGLNG (80 aa). Residues Y8, W41, K45, 52-53, and 65-66 each bind glutathione; these read QL and QT. The 118-residue stretch at 83 to 200 folds into the GST C-terminal domain; the sequence is NEQEATFLDM…YLEKRKADKV (118 aa).

The protein belongs to the GST superfamily. Pi family. As to quaternary structure, homodimer. Expressed in cells at the mouth and adjacent to the pharyngeal bulbs of the head and also in the tail.

The enzyme catalyses RX + glutathione = an S-substituted glutathione + a halide anion + H(+). In terms of biological role, conjugation of reduced glutathione to a wide number of exogenous and endogenous hydrophobic electrophiles. Responsible for approximately one-third of 4-hydroxy-2-nonenal conjugation. May play a role in the detoxification of reactive oxygen species produced during pathogenic bacterial infection. This Caenorhabditis elegans protein is Glutathione S-transferase P 10.